We begin with the raw amino-acid sequence, 274 residues long: Large ribosomal subunit protein uL2 (274 aa).

The interval 220–259 (VRGAAMNPRDHPHGGGEGRAPRGMSTPKTKWGKPARGVKT) is disordered. Residues 227-239 (PRDHPHGGGEGRA) are compositionally biased toward basic and acidic residues. Residues 249 to 259 (KWGKPARGVKT) are compositionally biased toward basic residues.

The protein belongs to the universal ribosomal protein uL2 family. As to quaternary structure, part of the 50S ribosomal subunit. Forms a bridge to the 30S subunit in the 70S ribosome.

Functionally, one of the primary rRNA binding proteins. Required for association of the 30S and 50S subunits to form the 70S ribosome, for tRNA binding and peptide bond formation. It has been suggested to have peptidyltransferase activity; this is somewhat controversial. Makes several contacts with the 16S rRNA in the 70S ribosome. The protein is Large ribosomal subunit protein uL2 of Chloroflexus aggregans (strain MD-66 / DSM 9485).